Here is a 264-residue protein sequence, read N- to C-terminus: S-adenosylmethionine decarboxylase proenzyme (264 aa).

Ser-113 (schiff-base intermediate with substrate; via pyruvic acid) is an active-site residue. Ser-113 bears the Pyruvic acid (Ser); by autocatalysis mark. Residue His-118 is the Proton acceptor; for processing activity of the active site. The active-site Proton donor; for catalytic activity is Cys-141.

Belongs to the prokaryotic AdoMetDC family. Type 2 subfamily. Heterooctamer of four alpha and four beta chains arranged as a tetramer of alpha/beta heterodimers. It depends on pyruvate as a cofactor. Post-translationally, is synthesized initially as an inactive proenzyme. Formation of the active enzyme involves a self-maturation process in which the active site pyruvoyl group is generated from an internal serine residue via an autocatalytic post-translational modification. Two non-identical subunits are generated from the proenzyme in this reaction, and the pyruvate is formed at the N-terminus of the alpha chain, which is derived from the carboxyl end of the proenzyme. The post-translation cleavage follows an unusual pathway, termed non-hydrolytic serinolysis, in which the side chain hydroxyl group of the serine supplies its oxygen atom to form the C-terminus of the beta chain, while the remainder of the serine residue undergoes an oxidative deamination to produce ammonia and the pyruvoyl group blocking the N-terminus of the alpha chain.

The enzyme catalyses S-adenosyl-L-methionine + H(+) = S-adenosyl 3-(methylsulfanyl)propylamine + CO2. Its pathway is amine and polyamine biosynthesis; S-adenosylmethioninamine biosynthesis; S-adenosylmethioninamine from S-adenosyl-L-methionine: step 1/1. Functionally, catalyzes the decarboxylation of S-adenosylmethionine to S-adenosylmethioninamine (dcAdoMet), the propylamine donor required for the synthesis of the polyamines spermine and spermidine from the diamine putrescine. In Xanthomonas campestris pv. campestris (strain B100), this protein is S-adenosylmethionine decarboxylase proenzyme.